The sequence spans 706 residues: Gamma-adducin (706 aa).

Residues 1 to 11 are compositionally biased toward low complexity; that stretch reads MSSDTSPAVVT. The disordered stretch occupies residues 1–23; it reads MSSDTSPAVVTTPPPPSMPHKER. Serine 2 carries the N-acetylserine modification. Phosphoserine is present on residues serine 31, serine 42, serine 64, serine 402, serine 414, serine 423, serine 442, and serine 461. Disordered regions lie at residues 471–495, 534–556, 574–610, and 651–706; these read AEDSSKVSSGTPIKIEDPNQFVPLN, PPSTMQFDDDDQGPPAPPNPFSH, QGLDDAEQGSLSDDAASVSQIQSQTQSPQSVPERLEE, and TSTT…KVEA. Lysine 484 participates in a covalent cross-link: Glycyl lysine isopeptide (Lys-Gly) (interchain with G-Cter in SUMO2). A phosphoserine mark is found at serine 583, serine 585, and serine 590. 2 stretches are compositionally biased toward low complexity: residues 590 to 605 and 651 to 662; these read SVSQIQSQTQSPQSVP and TSTTIENIEITI. Residues serine 673, serine 677, serine 679, serine 681, and serine 683 each carry the phosphoserine modification. Residues 682–706 show a composition bias toward basic residues; that stretch reads PSKKKKKFRTPSFLKKNKKKEKVEA. Positions 684–701 are interaction with calmodulin; that stretch reads KKKKKFRTPSFLKKNKKK.

It belongs to the aldolase class II family. Adducin subfamily. In terms of assembly, heterodimer of an alpha and a gamma subunit. Post-translationally, sumoylated. In terms of processing, proteolytically cleaved by asparagine endopeptidase (AEP) into 2 fragments. Overexpression of the 1-357 fragment induces neuronal apoptosis, and overexpression of either 1-357 or 358-706 fragment increases the degeneration of dendritic spines. Overexpression of the 1-357 fragment impairs neurite outgrowth by downregulating the expression of Rac2, and induces synaptic dysfunction and cognitive impairments in tau P301S transgenic mice, a mouse model for Alzheimer disease (AD). In terms of tissue distribution, cleavage fragment 1-357 is expressed in the brain and the expression increases with age (at protein level). The fragment is expressed in the cortex, hippocampal CA1 region and hippocampal dentate gyrus in tau P301S transgenic mice, a mouse model for Alzheimer disease (AD) (at protein level). The fragment is only weakly expressed in non-transgenic mouse brain sections (at protein level).

Its subcellular location is the cytoplasm. The protein resides in the cytoskeleton. The protein localises to the cell membrane. Its function is as follows. Membrane-cytoskeleton-associated protein that promotes the assembly of the spectrin-actin network. Plays a role in actin filament capping. Binds to calmodulin. Involved in myogenic reactivity of the renal afferent arteriole (Af-art), renal interlobular arteries and middle cerebral artery (MCA) to increased perfusion pressure. Involved in regulation of potassium channels in the vascular smooth muscle cells (VSMCs) of the Af-art and MCA ex vivo. Involved in regulation of glomerular capillary pressure, glomerular filtration rate (GFR) and glomerular nephrin expression in response to hypertension. Involved in renal blood flow (RBF) autoregulation. Plays a role in podocyte structure and function. Regulates globular monomer actin (G-actin) and filamentous polymer actin (F-actin) ratios in the primary podocytes affecting actin cytoskeleton organization. Regulates expression of synaptopodin, RhoA, Rac1 and CDC42 in the renal cortex and the primary podocytes. Regulates expression of nephrin in the glomeruli and in the primary podocytes, expression of nephrin and podocinin in the renal cortex, and expression of focal adhesion proteins integrin alpha-3 and integrin beta-1 in the glomeruli. Involved in cell migration and cell adhesion of podocytes, and in podocyte foot process effacement. Regulates expression of profibrotics markers MMP2, MMP9, TGF beta-1, tubular tight junction protein E-cadherin, and mesenchymal markers vimentin and alpha-SMA. Promotes the growth of neurites. This chain is Gamma-adducin (Add3), found in Mus musculus (Mouse).